A 442-amino-acid polypeptide reads, in one-letter code: SPRY domain-containing protein 3 (442 aa).

In terms of domain architecture, B30.2/SPRY spans 17-204 (DLNLHYRFLN…VRLHLNAELG (188 aa)). A disordered region spans residues 371–394 (EGEEEEEEEEEEEDGEEIEPEHEG). Residues 372 to 390 (GEEEEEEEEEEEDGEEIEP) show a composition bias toward acidic residues.

The polypeptide is SPRY domain-containing protein 3 (SPRYD3) (Pongo abelii (Sumatran orangutan)).